A 354-amino-acid chain; its full sequence is tRNA N6-adenosine threonylcarbamoyltransferase (354 aa).

Fe cation-binding residues include histidine 111 and histidine 115. Residues 134–138, aspartate 167, glycine 180, and asparagine 279 contribute to the substrate site; that span reads LVSGG. Residue aspartate 319 participates in Fe cation binding.

It belongs to the KAE1 / TsaD family. Requires Fe(2+) as cofactor.

Its subcellular location is the cytoplasm. It carries out the reaction L-threonylcarbamoyladenylate + adenosine(37) in tRNA = N(6)-L-threonylcarbamoyladenosine(37) in tRNA + AMP + H(+). In terms of biological role, required for the formation of a threonylcarbamoyl group on adenosine at position 37 (t(6)A37) in tRNAs that read codons beginning with adenine. Is involved in the transfer of the threonylcarbamoyl moiety of threonylcarbamoyl-AMP (TC-AMP) to the N6 group of A37, together with TsaE and TsaB. TsaD likely plays a direct catalytic role in this reaction. This chain is tRNA N6-adenosine threonylcarbamoyltransferase, found in Neisseria meningitidis serogroup B (strain ATCC BAA-335 / MC58).